The following is a 159-amino-acid chain: Phosphopantetheine adenylyltransferase (159 aa).

Residue Thr10 participates in substrate binding. Residues 10–11 (TF) and His18 contribute to the ATP site. Residues Lys42, Leu74, and Arg88 each contribute to the substrate site. Residues 89-91 (GMR), Glu99, and 124-130 (WSYVSST) each bind ATP.

The protein belongs to the bacterial CoaD family. Homohexamer. Requires Mg(2+) as cofactor.

It localises to the cytoplasm. The enzyme catalyses (R)-4'-phosphopantetheine + ATP + H(+) = 3'-dephospho-CoA + diphosphate. It participates in cofactor biosynthesis; coenzyme A biosynthesis; CoA from (R)-pantothenate: step 4/5. In terms of biological role, reversibly transfers an adenylyl group from ATP to 4'-phosphopantetheine, yielding dephospho-CoA (dPCoA) and pyrophosphate. This Mannheimia succiniciproducens (strain KCTC 0769BP / MBEL55E) protein is Phosphopantetheine adenylyltransferase.